Consider the following 565-residue polypeptide: NAD-dependent malic enzyme (565 aa).

Y104 functions as the Proton donor in the catalytic mechanism. R157 contributes to the NAD(+) binding site. The active-site Proton acceptor is the K175. The a divalent metal cation site is built by E246, D247, and D270. NAD(+)-binding residues include D270 and N418.

Belongs to the malic enzymes family. As to quaternary structure, homotetramer. Requires Mg(2+) as cofactor. The cofactor is Mn(2+).

It carries out the reaction (S)-malate + NAD(+) = pyruvate + CO2 + NADH. It catalyses the reaction oxaloacetate + H(+) = pyruvate + CO2. This Klebsiella pneumoniae (strain 342) protein is NAD-dependent malic enzyme.